The following is a 704-amino-acid chain: Elongation factor G 1 (704 aa).

Residues 8-285 form the tr-type G domain; sequence EKIRNIGISA…AVCAFLPNPK (278 aa). Residues 17–24, 84–88, and 138–141 each bind GTP; these read AHIDSGKT, DTPGH, and NKMD.

Belongs to the TRAFAC class translation factor GTPase superfamily. Classic translation factor GTPase family. EF-G/EF-2 subfamily.

It localises to the cytoplasm. Functionally, catalyzes the GTP-dependent ribosomal translocation step during translation elongation. During this step, the ribosome changes from the pre-translocational (PRE) to the post-translocational (POST) state as the newly formed A-site-bound peptidyl-tRNA and P-site-bound deacylated tRNA move to the P and E sites, respectively. Catalyzes the coordinated movement of the two tRNA molecules, the mRNA and conformational changes in the ribosome. In Myxococcus xanthus (strain DK1622), this protein is Elongation factor G 1.